A 206-amino-acid polypeptide reads, in one-letter code: Small ribosomal subunit protein uS4 (206 aa).

The S4 RNA-binding domain maps to 96–156 (SRLDNVVYRM…NKSKNQSRIK (61 aa)).

It belongs to the universal ribosomal protein uS4 family. Part of the 30S ribosomal subunit. Contacts protein S5. The interaction surface between S4 and S5 is involved in control of translational fidelity.

In terms of biological role, one of the primary rRNA binding proteins, it binds directly to 16S rRNA where it nucleates assembly of the body of the 30S subunit. Functionally, with S5 and S12 plays an important role in translational accuracy. This Buchnera aphidicola subsp. Acyrthosiphon pisum (strain 5A) protein is Small ribosomal subunit protein uS4.